The primary structure comprises 345 residues: L-threonine 3-dehydrogenase (345 aa).

Cys-42 serves as a coordination point for Zn(2+). Active-site charge relay system residues include Thr-44 and His-47. Residues His-67, Glu-68, Cys-97, Cys-100, Cys-103, and Cys-111 each coordinate Zn(2+). NAD(+)-binding positions include Ile-179, Asp-199, Arg-204, 266–268, and 290–291; these read LGI and IY.

Belongs to the zinc-containing alcohol dehydrogenase family. As to quaternary structure, homotetramer. Requires Zn(2+) as cofactor.

The protein localises to the cytoplasm. It catalyses the reaction L-threonine + NAD(+) = (2S)-2-amino-3-oxobutanoate + NADH + H(+). The protein operates within amino-acid degradation; L-threonine degradation via oxydo-reductase pathway; glycine from L-threonine: step 1/2. Its function is as follows. Catalyzes the NAD(+)-dependent oxidation of L-threonine to 2-amino-3-ketobutyrate. The polypeptide is L-threonine 3-dehydrogenase (Rhizobium johnstonii (strain DSM 114642 / LMG 32736 / 3841) (Rhizobium leguminosarum bv. viciae)).